Here is a 505-residue protein sequence, read N- to C-terminus: Deoxyguanosinetriphosphate triphosphohydrolase (505 aa).

Positions 66-273 constitute an HD domain; it reads RLTHSMEVQQ…MEAADDISYC (208 aa).

Belongs to the dGTPase family. Type 1 subfamily. In terms of assembly, homotetramer. Mg(2+) is required as a cofactor.

It catalyses the reaction dGTP + H2O = 2'-deoxyguanosine + triphosphate + H(+). Its function is as follows. dGTPase preferentially hydrolyzes dGTP over the other canonical NTPs. The sequence is that of Deoxyguanosinetriphosphate triphosphohydrolase from Escherichia coli O7:K1 (strain IAI39 / ExPEC).